The chain runs to 103 residues: Trp operon repressor homolog (103 aa).

Residues 59–82 mediate DNA binding; sequence QRQISQMLGVGIATITRGSNELKS.

It belongs to the TrpR family. In terms of assembly, homodimer.

The protein resides in the cytoplasm. Its function is as follows. This protein is an aporepressor. When complexed with L-tryptophan it binds the operator region of the trp operon and prevents the initiation of transcription. In Vibrio parahaemolyticus serotype O3:K6 (strain RIMD 2210633), this protein is Trp operon repressor homolog.